Consider the following 214-residue polypeptide: Ribosomal RNA small subunit methyltransferase G (214 aa).

S-adenosyl-L-methionine contacts are provided by residues G58, 109–110 (AE), and R126.

The protein belongs to the methyltransferase superfamily. RNA methyltransferase RsmG family.

It localises to the cytoplasm. Functionally, specifically methylates the N7 position of a guanine in 16S rRNA. This Ureaplasma parvum serovar 3 (strain ATCC 700970) protein is Ribosomal RNA small subunit methyltransferase G.